The primary structure comprises 267 residues: Geranylgeranylglyceryl phosphate synthase (267 aa).

Positions 23 and 52 each coordinate Mg(2+). Residues 173–179, 205–206, and 227–228 contribute to the sn-glycerol 1-phosphate site; these read YLEAGSG, GG, and GT.

Belongs to the GGGP/HepGP synthase family. Group II subfamily. It depends on Mg(2+) as a cofactor.

Its subcellular location is the cytoplasm. It catalyses the reaction sn-glycerol 1-phosphate + (2E,6E,10E)-geranylgeranyl diphosphate = sn-3-O-(geranylgeranyl)glycerol 1-phosphate + diphosphate. It participates in membrane lipid metabolism; glycerophospholipid metabolism. Its function is as follows. Prenyltransferase that catalyzes the transfer of the geranylgeranyl moiety of geranylgeranyl diphosphate (GGPP) to the C3 hydroxyl of sn-glycerol-1-phosphate (G1P). This reaction is the first ether-bond-formation step in the biosynthesis of archaeal membrane lipids. The chain is Geranylgeranylglyceryl phosphate synthase from Caldivirga maquilingensis (strain ATCC 700844 / DSM 13496 / JCM 10307 / IC-167).